The sequence spans 30 residues: Non-toxic phospholipase A2 (30 aa).

Ca(2+) contacts are provided by Tyr26, Gly28, and Gly30.

The protein belongs to the phospholipase A2 family. Group I subfamily. Homodimer. Ca(2+) is required as a cofactor. In terms of processing, glycosylated. In terms of tissue distribution, expressed by the venom gland.

It is found in the secreted. The catalysed reaction is a 1,2-diacyl-sn-glycero-3-phosphocholine + H2O = a 1-acyl-sn-glycero-3-phosphocholine + a fatty acid + H(+). Its activity is regulated as follows. Enzymatic activity is diminished by Cd(2+) and Hg(2+). Functionally, relatively highly potent phospholipase A2 that displays potent antimicrobial and hemolytic activities. It does not show cytotoxic effects on the three human cell lines tested. PLA2 catalyzes the calcium-dependent hydrolysis of the 2-acyl groups in 3-sn-phosphoglycerides. It shows similar potencies on both Gram-negative and Gram-positive bacteria: B.cereus (MIC&gt;9 ug/ml), B.subtilis (MIC&gt;12 ug/ml), E.faecalis (MIC&gt;7 ug/ml), S.epidermidis (MIC&gt;12 ug/ml), S.aureux (MIC&gt;5 ug/ml), E.coli (MIC&gt;7 ug/ml), K.pneumonia (MIC&gt;8 ug/ml), P.aeruginosa (MIC&gt;10 ug/ml), and S.enteric (MIC&gt;9 ug/ml). It also shows antifungal activities: A.niger (MIC&gt;15 ug/ml), B.cinerea (MIC&gt;12 ug/ml), F.solani (MIC&gt;15 ug/ml), and P.digitatum (MIC&gt;10 ug/ml). The protein is Non-toxic phospholipase A2 of Walterinnesia aegyptia (Desert black snake).